Reading from the N-terminus, the 237-residue chain is Protein CUSTOS (237 aa).

Disordered regions lie at residues 1–23, 50–69, and 97–237; these read MAAPRRGTQKSDSDSSDEDLDRF, LRVRPDCHEHDGNELQTTPE, and ISKA…LGNE. Residues 52 to 62 show a composition bias toward basic and acidic residues; that stretch reads VRPDCHEHDGN. Positions 162–177 are enriched in polar residues; it reads STLQQEPQSTPSNVCD. Positions 181–190 are enriched in basic residues; sequence PKKKRKKKKK. The short motif at 182-190 is the Nucleolar localization signal (NLS1) element; it reads KKKRKKKKK. Basic and acidic residues-rich tracts occupy residues 203 to 216 and 225 to 237; these read ETMHIEPGKNELQA and KLEMAHCDELGNE. The Nucleolar localization signal (NLS2) signature appears at 217–225; that stretch reads KRKKKKKQK.

The protein belongs to the CUSTOS family. Interacts (via NLS1 and NLS2) with dvl2; the interaction is negatively regulated by Wnt stimulation. Interacts with csnk1a1. Interacts with ctnnb1; the interaction is positively regulated by Wnt stimulation. Post-translationally, phosphorylated by ck1/csnk1a1.

It is found in the nucleus envelope. In terms of biological role, essential for Spemann-Mangold organizer formation and subsequent anterior head development in the embryo. Inhibits canonical Wnt signaling pathway by antagonizing nuclear import of beta-catenin (ctnnb1) during embryogenesis. The chain is Protein CUSTOS from Xenopus laevis (African clawed frog).